The chain runs to 139 residues: Nucleoside diphosphate kinase (139 aa).

Lys-9, Phe-57, Arg-85, Thr-91, Arg-102, and Asn-112 together coordinate ATP. Residue His-115 is the Pros-phosphohistidine intermediate of the active site.

It belongs to the NDK family. Homotetramer. The cofactor is Mg(2+).

The protein resides in the cytoplasm. The enzyme catalyses a 2'-deoxyribonucleoside 5'-diphosphate + ATP = a 2'-deoxyribonucleoside 5'-triphosphate + ADP. It carries out the reaction a ribonucleoside 5'-diphosphate + ATP = a ribonucleoside 5'-triphosphate + ADP. Its function is as follows. Major role in the synthesis of nucleoside triphosphates other than ATP. The ATP gamma phosphate is transferred to the NDP beta phosphate via a ping-pong mechanism, using a phosphorylated active-site intermediate. The protein is Nucleoside diphosphate kinase of Exiguobacterium sp. (strain ATCC BAA-1283 / AT1b).